Consider the following 1887-residue polypeptide: Protein TIC 214 (1887 aa).

The next 6 membrane-spanning stretches (helical) occupy residues 18-38 (IINSVVVVGLYYGFLTTFSIG), 64-84 (FITGQLMMFISIYYAPLHLAL), 87-107 (PHTITVLALPYLLFHFFWNNH), 124-144 (LSIQCVFLNNLIFQLFNHFIL), 172-192 (VGWLIGHILFMKWLGLVLVWI), and 221-241 (IFSILLFITCVYYLGRIPSPI). Disordered stretches follow at residues 248–300 (EASK…EGWD), 785–805 (REEQTKREEKKEKDKKEDNKR), and 1569–1603 (LPSNKKIKNRSQETKEPPSQRERGSDIENKGNLSP). Positions 256–268 (VESEEERDVEIET) are enriched in acidic residues. The segment covering 1578 to 1597 (RSQETKEPPSQRERGSDIEN) has biased composition (basic and acidic residues).

This sequence belongs to the TIC214 family. Part of the Tic complex.

Its subcellular location is the plastid. It is found in the chloroplast inner membrane. In terms of biological role, involved in protein precursor import into chloroplasts. May be part of an intermediate translocation complex acting as a protein-conducting channel at the inner envelope. The polypeptide is Protein TIC 214 (Solanum tuberosum (Potato)).